Here is a 478-residue protein sequence, read N- to C-terminus: Protein nucleotidyltransferase YdiU (478 aa).

Glycine 84, glycine 86, arginine 87, lysine 107, aspartate 119, glycine 120, arginine 170, and arginine 177 together coordinate ATP. Aspartate 246 (proton acceptor) is an active-site residue. Mg(2+) is bound by residues asparagine 247 and aspartate 256. Aspartate 256 lines the ATP pocket.

Belongs to the SELO family. Mg(2+) serves as cofactor. The cofactor is Mn(2+).

It carries out the reaction L-seryl-[protein] + ATP = 3-O-(5'-adenylyl)-L-seryl-[protein] + diphosphate. The enzyme catalyses L-threonyl-[protein] + ATP = 3-O-(5'-adenylyl)-L-threonyl-[protein] + diphosphate. It catalyses the reaction L-tyrosyl-[protein] + ATP = O-(5'-adenylyl)-L-tyrosyl-[protein] + diphosphate. The catalysed reaction is L-histidyl-[protein] + UTP = N(tele)-(5'-uridylyl)-L-histidyl-[protein] + diphosphate. It carries out the reaction L-seryl-[protein] + UTP = O-(5'-uridylyl)-L-seryl-[protein] + diphosphate. The enzyme catalyses L-tyrosyl-[protein] + UTP = O-(5'-uridylyl)-L-tyrosyl-[protein] + diphosphate. Functionally, nucleotidyltransferase involved in the post-translational modification of proteins. It can catalyze the addition of adenosine monophosphate (AMP) or uridine monophosphate (UMP) to a protein, resulting in modifications known as AMPylation and UMPylation. The chain is Protein nucleotidyltransferase YdiU from Escherichia coli O139:H28 (strain E24377A / ETEC).